Here is a 2773-residue protein sequence, read N- to C-terminus: Peramine synthetase A (2773 aa).

The segment at 246-644 is adenylation 1; the sequence is FEDQVYSQPL…GRKDAQVKIR (399 aa). Residues 774-850 enclose the Carrier 1 domain; that stretch reads QPTCEMEERM…DLAKNCSQTL (77 aa). Ser811 is subject to O-(pantetheine 4'-phosphoryl)serine. Residues 888–1301 are condensation; that stretch reads QDAYPCTRLQ…MSSAEDLEQI (414 aa). The tract at residues 1321-1720 is adenylation 2; the sequence is ADQVQARPDS…GRKDTQVKVR (400 aa). Residues 1810-1949 are methylation (Met) domain; the sequence is IGRDFVGWSS…IIQHLASLGS (140 aa). A disordered region spans residues 2250–2271; sequence MLSESLQQKAPPTARKRLPSTA. In terms of domain architecture, Carrier 2 spans 2267–2345; it reads LPSTAPERAM…HLLQTAAAGV (79 aa). Ser2304 is subject to O-(pantetheine 4'-phosphoryl)serine. Positions 2397–2715 are thiesterase (TE) domain; it reads TVVLTGANGF…LQDLADTARS (319 aa).

It belongs to the NRP synthetase family. Pantetheine 4'-phosphate serves as cofactor.

It catalyses the reaction (S)-1-pyrroline-5-carboxylate + L-arginine + S-adenosyl-L-methionine + 2 ATP = peramine + 2 AMP + S-adenosyl-L-homocysteine + 2 diphosphate + H2O + 2 H(+). Nonribosomal peptide synthetase involved in the biosynthesis of peramine, a pyrrolopyrazine synthesized in association with the grass host that protects the plant from insect herbivory. The single multifunctional NRPS perA seems to be responsible for all catalytic steps in the biosynthesis of peramine. The condensation domain of perA is proposed to catalyze formation of a peptide bond between 1-pyrroline-5-carboxylate and arginine. The methylation domain of perA would catalyze the N-methylation of the alpha-amino group of arginine. The reductase domain is proposed to be responsible for reduction of the thioester and the cyclization to form an iminium ion resulting in release from the peptide synthetase. Deprotonation of this intermediate and oxidation of the pyrroline ring would give rise to peramine. This final oxidation to give the pyrrole functionality may be spontaneous. This is Peramine synthetase A from Epichloe festucae (strain Fl1).